Reading from the N-terminus, the 216-residue chain is 3-isopropylmalate dehydratase small subunit (216 aa).

This sequence belongs to the LeuD family. LeuD type 1 subfamily. As to quaternary structure, heterodimer of LeuC and LeuD.

The enzyme catalyses (2R,3S)-3-isopropylmalate = (2S)-2-isopropylmalate. It participates in amino-acid biosynthesis; L-leucine biosynthesis; L-leucine from 3-methyl-2-oxobutanoate: step 2/4. Catalyzes the isomerization between 2-isopropylmalate and 3-isopropylmalate, via the formation of 2-isopropylmaleate. The protein is 3-isopropylmalate dehydratase small subunit of Marinomonas sp. (strain MWYL1).